Consider the following 228-residue polypeptide: UPF0758 protein H16_A3033 (228 aa).

The 123-residue stretch at 102–224 (GFDGPAAVRN…IRSLADCCDR (123 aa)) folds into the MPN domain. Zn(2+) contacts are provided by His173, His175, and Asp186. A JAMM motif motif is present at residues 173–186 (HNHPRGTTAPSQSD).

Belongs to the UPF0758 family.

In Cupriavidus necator (strain ATCC 17699 / DSM 428 / KCTC 22496 / NCIMB 10442 / H16 / Stanier 337) (Ralstonia eutropha), this protein is UPF0758 protein H16_A3033.